Reading from the N-terminus, the 176-residue chain is NAD(P)H-quinone oxidoreductase subunit J (176 aa).

Belongs to the complex I 30 kDa subunit family. NDH-1 can be composed of about 15 different subunits; different subcomplexes with different compositions have been identified which probably have different functions.

The protein resides in the cellular thylakoid membrane. It catalyses the reaction a plastoquinone + NADH + (n+1) H(+)(in) = a plastoquinol + NAD(+) + n H(+)(out). It carries out the reaction a plastoquinone + NADPH + (n+1) H(+)(in) = a plastoquinol + NADP(+) + n H(+)(out). In terms of biological role, NDH-1 shuttles electrons from an unknown electron donor, via FMN and iron-sulfur (Fe-S) centers, to quinones in the respiratory and/or the photosynthetic chain. The immediate electron acceptor for the enzyme in this species is believed to be plastoquinone. Couples the redox reaction to proton translocation, and thus conserves the redox energy in a proton gradient. Cyanobacterial NDH-1 also plays a role in inorganic carbon-concentration. The chain is NAD(P)H-quinone oxidoreductase subunit J from Prochlorococcus marinus (strain MIT 9515).